We begin with the raw amino-acid sequence, 372 residues long: MWPFASVPAGAKCRLVETLPENMDFRSDHLTTFECFNEIITLAKKYIYIASFCCNPLSTTRGALIFDKLKEASEKGIKIIVLLDERGKRNLGELQSHCPDINFITVNIDKKNNVGLLLGCFWVSDDERCYVGNASFTGGSIHTIKTLGVYSDYPPLATDLRRRFDTFKAFNSAKNSWLNLCSAACCLPVSTAYHIKNPIGGVFFTDSPEHLLGYSRDLDTDVVIDKLRSAKTSIDIEHLAIVPTTRVDGNSYYWPDIYNSIIEAAINRGVKIRLLVGNWDKNDVYSMATARSLDALCVQNDLSVKVFTIQNNTKLLIVDDEYVHITSANFDGTHYQNHGFVSFNSIDKQLVSEAKKIFERDWVSSHSKSLKI.

The YPPL motif lies at 153 to 156; the sequence is YPPL. Residues Cys-185 and Cys-186 are each lipidated (S-palmitoyl cysteine; by host). A PLD phosphodiesterase domain is found at 307–334; it reads FTIQNNTKLLIVDDEYVHITSANFDGTH.

Belongs to the orthopoxvirus OPG057 family. Interacts with protein OPG190. Post-translationally, palmitoylated. Attachment of the palmitate moiety is essential for correct intracellular targeting and protein function.

Its subcellular location is the virion membrane. It localises to the host Golgi apparatus. The protein localises to the host trans-Golgi network. The protein resides in the host endoplasmic reticulum membrane. It catalyses the reaction a 1,2-diacyl-sn-glycero-3-phosphocholine + H2O = a 1,2-diacyl-sn-glycero-3-phosphate + choline + H(+). In terms of biological role, major envelope protein that plays a role in the biogenesis of the viral double membrane and in egress of virus from the host cell. Produces the wrapped form of virus that is required for cell-to-cell spread. Acts as a lipase with broad specificity including phospholipase C, phospholipase A, and triacylglycerol lipase activities. The polypeptide is Envelope phospholipase OPG057 (OPG057) (Vaccinia virus (strain Copenhagen) (VACV)).